Consider the following 71-residue polypeptide: Putative defensin-like protein 303 (71 aa).

A signal peptide spans 1–25 (MKSNKATFFLGLLLVYAFCIMLIES). 3 cysteine pairs are disulfide-bonded: cysteine 27–cysteine 45, cysteine 33–cysteine 50, and cysteine 39–cysteine 52.

It belongs to the DEFL family.

It localises to the secreted. In Arabidopsis thaliana (Mouse-ear cress), this protein is Putative defensin-like protein 303.